The sequence spans 46 residues: Protein PsbN (46 aa).

Residues 10–30 (IAITILIVLLGLTAFGVYTAF) traverse the membrane as a helical segment.

This sequence belongs to the PsbN family.

It is found in the cellular thylakoid membrane. May play a role in photosystem I and II biogenesis. The sequence is that of Protein PsbN from Prochlorococcus marinus (strain SARG / CCMP1375 / SS120).